Consider the following 189-residue polypeptide: UPF0301 protein RMA_0049 (189 aa).

The protein belongs to the UPF0301 (AlgH) family.

In Rickettsia massiliae (strain Mtu5), this protein is UPF0301 protein RMA_0049.